The sequence spans 379 residues: MEGNRDEAEKCVEIAREALNAGNREKAQRFLQKAEKLYPLPSARALLEIIMKNGSTAGNSPHCRKPSGGGDQSKPNCTKDSSSGSGESGKGYTKDQVDGVLSINKCKNYYEVLGVTKDAGDEDLKKAYRKLALKFHPDKNHAPGATDAFKKIGNAYAVLSNPEKRKQYDLTGNEEQACNQQNNGRFNFHRGCEADITPEDLFNIFFGGGFPSGSVHSFSNGRAGYSNQHQHRHSGHEREEERGDGGFSVFIQLMPIIVLILVSLLSQLMVSNPPYSLYPRSGSGQTIKMQTENLGVIYYVNKDFKNEYKGMLLQKVEKSVEEDYVTNIRNNCWKERQQKTDMQYAAKVYHDERLRRKAEALSMDNCKELERLTSIYKGG.

At 1–244 the chain is on the cytoplasmic side; that stretch reads MEGNRDEAEK…GHEREEERGD (244 aa). A disordered region spans residues 55–94; it reads STAGNSPHCRKPSGGGDQSKPNCTKDSSSGSGESGKGYTK. Residues 108-172 form the J domain; that stretch reads NYYEVLGVTK…EKRKQYDLTG (65 aa). The segment at 221–241 is disordered; sequence GRAGYSNQHQHRHSGHEREEE. The chain crosses the membrane as a helical span at residues 245-265; that stretch reads GGFSVFIQLMPIIVLILVSLL. Over 266–379 the chain is Lumenal; sequence SQLMVSNPPY…ERLTSIYKGG (114 aa).

Belongs to the DnaJ family. DNAJB12/DNAJB14 subfamily. As to quaternary structure, interacts (via J domain) with HSPA8/Hsc70. Forms a multiprotein complex, at least composed of DNAJB12, DNAJB14, HSPA8/Hsc70 and SGTA; interaction with DNAJB14 and HSPA8/Hsc70 is direct.

It localises to the endoplasmic reticulum membrane. The protein localises to the nucleus membrane. Functionally, acts as a co-chaperone with HSPA8/Hsc70; required to promote protein folding and trafficking, prevent aggregation of client proteins, and promote unfolded proteins to endoplasmic reticulum-associated degradation (ERAD) pathway. Acts by determining HSPA8/Hsc70's ATPase and polypeptide-binding activities. Can also act independently of HSPA8/Hsc70: together with DNAJB12, acts as a chaperone that promotes maturation of potassium channels KCND2 and KCNH2 by stabilizing nascent channel subunits and assembling them into tetramers. While stabilization of nascent channel proteins is dependent on HSPA8/Hsc70, the process of oligomerization of channel subunits is independent of HSPA8/Hsc70. When overexpressed, forms membranous structures together with DNAJB12 and HSPA8/Hsc70 within the nucleus; the role of these structures, named DJANGOs, is still unclear. In Bos taurus (Bovine), this protein is DnaJ homolog subfamily B member 14 (DNAJB14).